The sequence spans 181 residues: Ribosome maturation factor RimM (181 aa).

Positions 100–177 (EEGFYWMQLI…QIQVDWQLED (78 aa)) constitute a PRC barrel domain.

It belongs to the RimM family. In terms of assembly, binds ribosomal protein uS19.

Its subcellular location is the cytoplasm. In terms of biological role, an accessory protein needed during the final step in the assembly of 30S ribosomal subunit, possibly for assembly of the head region. Essential for efficient processing of 16S rRNA. May be needed both before and after RbfA during the maturation of 16S rRNA. It has affinity for free ribosomal 30S subunits but not for 70S ribosomes. The protein is Ribosome maturation factor RimM of Hydrogenovibrio crunogenus (strain DSM 25203 / XCL-2) (Thiomicrospira crunogena).